The sequence spans 1063 residues: MASTTPITMEDLQKALEAQSRALRAELAAGASQSRRPRPPRQRDSSTSGDDSGRDSGGPRRRRGNRGRGQRKDWSMAPPPPEERQESRSQTPAPKPSRAPPQQPQPPRMQTGRGGSAPRPELGPPTNPFQAAVARGLRPPLHDPDTEAPTEACVTSWLWSEGEGAVFYRVDLHFTNLGTPPLDEDGRWDPALMYNPCGPEPPAHVVRAYNQPAGDVRGVWGKGERTYTEQDFRVGGTRWHRLLRMPVRGLDGDSAPLPPHTTERIETRSARHPWRIRFGAPQAFLAGLLLAAVAVGTARAGLQPRADMAAPPAPPQPPCAHGQHYGHHHHQLPFLGHDGHHGGTLRVGQHHRNASDVLPGHCLQGGWGCYNLSDWHQGTHVCHTKHMDFWCVEHDRPPPATPTPLTTAANSTTAATPATAPAPCHAGLNDSCGGFLSGCGPMRLRHGADTRCGRLICGLSTTAQYPPTRFACAMRWGLPPWELVVLTARPEDGWTCRGVPAHPGTRCPELVSPMGRATCSPASALWLATANALSLDHALAAFVLLFPWVLIFMVCRRACRRRGAAAALTAVVLQGYNPPAYGEEAFTYLCTAPGCATQTPVPVRLAGVRFESKIVDGGCFAPWDLEATGACICEIPTDVSCEGLGAWVPTAPCARIWNGTQRACTFWAVNAYSSGGYAQLASYFNPGGSYYKQYHPTACEVEPAFGHSDAACWGFPTDTVMSVFALASYVQHPHKTVRVKFHTETRTVWQLSVAGVSCNVTTEHPFCNTPHGQLEVQVPPDPGDLVEYIMNYTGNQQSRWGLGSPNCHGPDWASPVCQRHSPDCSRLVGATPERPRLRLVDADDPLLRTAPGPGEVWVTPVIGSQARKCGLHIRAGPYGHATVEMPEWIHAHTTSDPWHPPGPLGLKFKTVRPVALPRALAPPRNVRVTGCYQCGTPALVEGLAPGGGNCHLTVNGEDVGAVPPGKFVTAALLNTPPPYQVSCGGESDRASARVIDPAAQSFTGVVYGTHTTAVSETRQTWAEWAAAHWWQLTLGAVCALLLAGLLACCAKCLYYLRGAIAPR.

A disordered region spans residues 1 to 131; sequence MASTTPITME…LGPPTNPFQA (131 aa). A human C1QBP/SF2P32-binding region spans residues 30 to 69; that stretch reads GASQSRRPRPPRQRDSSTSGDDSGRDSGGPRRRRGNRGRG. A Phosphoserine; by host modification is found at serine 46. Basic residues predominate over residues 59-69; sequence PRRRRGNRGRG. Positions 93–107 are enriched in pro residues; sequence APKPSRAPPQQPQPP. The cysteines at positions 153 and 197 are disulfide-linked. A functions as E2 signal peptide region spans residues 279 to 300; it reads GAPQAFLAGLLLAAVAVGTARA. At 301–534 the chain is on the extracellular side; the sequence is GLQPRADMAA…LWLATANALS (234 aa). Residues 305 to 347 form a disordered region; the sequence is RADMAAPPAPPQPPCAHGQHYGHHHHQLPFLGHDGHHGGTLRV. 4 N-linked (GlcNAc...) asparagine; by host glycosylation sites follow: asparagine 353, asparagine 371, asparagine 410, and asparagine 429. Residues 535-555 traverse the membrane as a helical segment; that stretch reads LDHALAAFVLLFPWVLIFMVC. Over 556–582 the chain is Cytoplasmic; sequence RRACRRRGAAAALTAVVLQGYNPPAYG. The interval 563 to 582 is functions as E1 signal peptide; sequence GAAAALTAVVLQGYNPPAYG. Residues 583 to 1028 are Extracellular-facing; it reads EEAFTYLCTA…QTWAEWAAAH (446 aa). Disulfide bonds link cysteine 590-cysteine 595, cysteine 619-cysteine 824, cysteine 641-cysteine 653, cysteine 699-cysteine 712, cysteine 758-cysteine 767, cysteine 807-cysteine 817, cysteine 931-cysteine 934, and cysteine 950-cysteine 983. An N-linked (GlcNAc...) asparagine; by host glycan is attached at asparagine 658. Ca(2+)-binding residues include asparagine 670 and alanine 671. Ca(2+)-binding residues include aspartate 718 and threonine 719. N-linked (GlcNAc...) asparagine; by host glycosylation is found at asparagine 759 and asparagine 791. O-linked (GalNAc...) threonine; by host glycosylation is found at threonine 1011 and threonine 1012. The chain crosses the membrane as a helical span at residues 1029–1049; that stretch reads WWQLTLGAVCALLLAGLLACC. Residues 1050–1063 are Extracellular-facing; the sequence is AKCLYYLRGAIAPR.

In terms of assembly, homodimer; further assembles into homooligomer. Interacts with human C1QBP. Interacts (via N-terminus) with protease/methyltransferase p150. As to quaternary structure, heterodimer with spike glycoprotein E2. Heterodimer with spike glycoprotein E1. In terms of processing, structural polyprotein: Specific enzymatic cleavages in vivo yield mature proteins. Two signal peptidase-mediated cleavages within the polyprotein produce the structural proteins capsid, E2, and E1. The E2 signal peptide remains attached to the C-terminus of the capsid protein after cleavage by the signal peptidase. Another signal peptide at E2 C-terminus directs E1 to the ER, with a similar mechanism. Contains three N-linked oligosaccharides. Post-translationally, capsid is phosphorylated on Ser-46 by host. This phosphorylation negatively regulates capsid protein RNA-binding activity. Dephosphorylated by human PP1A.

It localises to the virion. It is found in the host cytoplasm. The protein localises to the host mitochondrion. The protein resides in the virion membrane. Its subcellular location is the host Golgi apparatus membrane. Functionally, capsid protein interacts with genomic RNA and assembles into icosahedric core particles 65-70 nm in diameter. The resulting nucleocapsid eventually associates with the cytoplasmic domain of E2 at the cell membrane, leading to budding and formation of mature virions from host Golgi membranes. Phosphorylation negatively regulates RNA-binding activity, possibly delaying virion assembly during the viral replication phase. Capsid protein dimerizes and becomes disulfide-linked in the virion. Modulates genomic RNA replication. Modulates subgenomic RNA synthesis by interacting with human C1QBP/SF2P32. Induces both perinuclear clustering of mitochondria and the formation of electron-dense intermitochondrial plaques, both hallmarks of rubella virus infected cells. Induces apoptosis when expressed in transfected cells. Its function is as follows. Responsible for viral attachment to target host cell, by binding to the cell receptor. Its transport to the plasma membrane depends on interaction with E1 protein. The surface glycoproteins display an irregular helical organization and a pseudo-tetrameric inner nucleocapsid arrangement. Class II viral fusion protein. Fusion activity is inactive as long as E1 is bound to E2 in mature virion. After virus attachment to target cell and clathrin-mediated endocytosis, acidification of the endosome would induce dissociation of E1/E2 heterodimer and concomitant trimerization of the E1 subunits. This E1 homotrimer is fusion active, and promotes release of viral nucleocapsid in cytoplasm after endosome and viral membrane fusion. The cytoplasmic tail of spike glycoprotein E1 modulates virus release. The surface glycoproteins display an irregular helical organization and a pseudo-tetrameric inner nucleocapsid arrangement. This is Structural polyprotein from Rubella virus (strain RN-UK86) (RUBV).